We begin with the raw amino-acid sequence, 218 residues long: Thiopurine S-methyltransferase (218 aa).

The S-adenosyl-L-methionine site is built by Trp10, Leu45, Glu66, and Arg123.

It belongs to the class I-like SAM-binding methyltransferase superfamily. TPMT family.

Its subcellular location is the cytoplasm. It catalyses the reaction S-adenosyl-L-methionine + a thiopurine = S-adenosyl-L-homocysteine + a thiopurine S-methylether.. The polypeptide is Thiopurine S-methyltransferase (Pseudomonas aeruginosa (strain UCBPP-PA14)).